A 62-amino-acid polypeptide reads, in one-letter code: Large ribosomal subunit protein uL29 (62 aa).

The protein belongs to the universal ribosomal protein uL29 family.

The polypeptide is Large ribosomal subunit protein uL29 (Desulfosudis oleivorans (strain DSM 6200 / JCM 39069 / Hxd3) (Desulfococcus oleovorans)).